We begin with the raw amino-acid sequence, 488 residues long: Glutamyl-tRNA(Gln) amidotransferase subunit A (488 aa).

Active-site charge relay system residues include K77 and S152. S176 (acyl-ester intermediate) is an active-site residue.

Belongs to the amidase family. GatA subfamily. In terms of assembly, heterotrimer of A, B and C subunits.

It carries out the reaction L-glutamyl-tRNA(Gln) + L-glutamine + ATP + H2O = L-glutaminyl-tRNA(Gln) + L-glutamate + ADP + phosphate + H(+). Functionally, allows the formation of correctly charged Gln-tRNA(Gln) through the transamidation of misacylated Glu-tRNA(Gln) in organisms which lack glutaminyl-tRNA synthetase. The reaction takes place in the presence of glutamine and ATP through an activated gamma-phospho-Glu-tRNA(Gln). The polypeptide is Glutamyl-tRNA(Gln) amidotransferase subunit A (Streptococcus pyogenes serotype M28 (strain MGAS6180)).